Here is a 499-residue protein sequence, read N- to C-terminus: Probable malate:quinone oxidoreductase 4 (499 aa).

It belongs to the MQO family. FAD is required as a cofactor.

It catalyses the reaction (S)-malate + a quinone = a quinol + oxaloacetate. It functions in the pathway carbohydrate metabolism; tricarboxylic acid cycle; oxaloacetate from (S)-malate (quinone route): step 1/1. This chain is Probable malate:quinone oxidoreductase 4, found in Staphylococcus epidermidis (strain ATCC 35984 / DSM 28319 / BCRC 17069 / CCUG 31568 / BM 3577 / RP62A).